Here is a 453-residue protein sequence, read N- to C-terminus: Bifunctional protein GlmU (453 aa).

The segment at 1–225 (MNIVILAAGT…EWETLGVNSK (225 aa)) is pyrophosphorylase. Residues 6-9 (LAAG), Lys20, Gln71, 76-77 (GT), 98-100 (YGD), Gly135, Glu150, Asn165, and Asn223 each bind UDP-N-acetyl-alpha-D-glucosamine. Residue Asp100 participates in Mg(2+) binding. Residue Asn223 participates in Mg(2+) binding. The segment at 226–246 (AQLAELERIHQRNVADALLVD) is linker. Residues 247-453 (GVTLADPARV…GYVRPVKKKS (207 aa)) form an N-acetyltransferase region. Residues Arg329 and Lys347 each coordinate UDP-N-acetyl-alpha-D-glucosamine. Catalysis depends on His359, which acts as the Proton acceptor. UDP-N-acetyl-alpha-D-glucosamine contacts are provided by Tyr362 and Asn373. Acetyl-CoA contacts are provided by residues Ala376, 382-383 (NY), Ser401, and Ala419.

The protein in the N-terminal section; belongs to the N-acetylglucosamine-1-phosphate uridyltransferase family. In the C-terminal section; belongs to the transferase hexapeptide repeat family. As to quaternary structure, homotrimer. Requires Mg(2+) as cofactor.

The protein resides in the cytoplasm. It carries out the reaction alpha-D-glucosamine 1-phosphate + acetyl-CoA = N-acetyl-alpha-D-glucosamine 1-phosphate + CoA + H(+). The catalysed reaction is N-acetyl-alpha-D-glucosamine 1-phosphate + UTP + H(+) = UDP-N-acetyl-alpha-D-glucosamine + diphosphate. Its pathway is nucleotide-sugar biosynthesis; UDP-N-acetyl-alpha-D-glucosamine biosynthesis; N-acetyl-alpha-D-glucosamine 1-phosphate from alpha-D-glucosamine 6-phosphate (route II): step 2/2. It functions in the pathway nucleotide-sugar biosynthesis; UDP-N-acetyl-alpha-D-glucosamine biosynthesis; UDP-N-acetyl-alpha-D-glucosamine from N-acetyl-alpha-D-glucosamine 1-phosphate: step 1/1. It participates in bacterial outer membrane biogenesis; LPS lipid A biosynthesis. Catalyzes the last two sequential reactions in the de novo biosynthetic pathway for UDP-N-acetylglucosamine (UDP-GlcNAc). The C-terminal domain catalyzes the transfer of acetyl group from acetyl coenzyme A to glucosamine-1-phosphate (GlcN-1-P) to produce N-acetylglucosamine-1-phosphate (GlcNAc-1-P), which is converted into UDP-GlcNAc by the transfer of uridine 5-monophosphate (from uridine 5-triphosphate), a reaction catalyzed by the N-terminal domain. The sequence is that of Bifunctional protein GlmU from Burkholderia orbicola (strain AU 1054).